Consider the following 573-residue polypeptide: NEDD4-binding protein 3-A (573 aa).

Disordered regions lie at residues leucine 168–leucine 216 and leucine 382–lysine 407. Polar residues-rich tracts occupy residues glutamine 184 to serine 196 and aspartate 207 to leucine 216. Positions valine 289–methionine 539 form a coiled coil.

Belongs to the N4BP3 family.

It localises to the cytoplasmic vesicle. Its subcellular location is the cell projection. It is found in the axon. The protein resides in the dendrite. Functionally, plays a role in axon and dendrite arborization during cranial nerve development. Also important for neural crest migration and early development of other anterior structures including eye, brain and cranial cartilage. This is NEDD4-binding protein 3-A from Xenopus laevis (African clawed frog).